The primary structure comprises 624 residues: (-)-beta-phellandrene synthase 1, chloroplastic (624 aa).

The transit peptide at 1–48 (MAIVSSVPLASKSCLHKSLISSIHKLKPFCRTIPTLGMSRPGKYVMPS) directs the protein to the chloroplast. The Mg(2+) site is built by aspartate 375, aspartate 379, and aspartate 527. Positions 375 to 379 (DDMYD) match the DDXXD motif motif.

It belongs to the terpene synthase family. Tpsd subfamily. Requires Mg(2+) as cofactor. The cofactor is Mn(2+).

It localises to the plastid. The protein localises to the chloroplast. It carries out the reaction (2E)-geranyl diphosphate = (-)-beta-phellandrene + diphosphate. The protein operates within terpene metabolism; oleoresin biosynthesis. Terpene synthase (TPS) involved in the biosynthesis of monoterpene natural products included in conifer oleoresin secretions and volatile emissions; these compounds contribute to biotic and abiotic stress defense against herbivores and pathogens. Catalyzes the conversion of (2E)-geranyl diphosphate (GPP) to (-)-beta-phellandrene. The polypeptide is (-)-beta-phellandrene synthase 1, chloroplastic (Picea sitchensis (Sitka spruce)).